Here is a 132-residue protein sequence, read N- to C-terminus: MVEPFLGTWKLVSSENFEDYMKELGVNFAARNMAGLVKPTVTISVDGKMMTIRTESSFQDTKISFKLGEEFDETTADNRKVKSTITLENGSMIHVQKWLGKETTIKRKIVDEKMVVECKMNNIVSTRIYEKV.

Phosphoserine is present on residues Ser13, Ser14, Ser44, and Ser91.

This sequence belongs to the calycin superfamily. Fatty-acid binding protein (FABP) family.

The protein localises to the cytoplasm. The polypeptide is Fatty acid-binding protein 9 (FABP9) (Homo sapiens (Human)).